The sequence spans 155 residues: Photosystem I reaction center subunit XI (155 aa).

Helical transmembrane passes span 80 to 102 (LISGIALILVATACLAAYGLVSF) and 117 to 139 (GWSQFTAGFFVGAMGSAFVAFFL).

This sequence belongs to the PsaL family.

The protein localises to the cellular thylakoid membrane. The sequence is that of Photosystem I reaction center subunit XI from Thermosynechococcus vestitus (strain NIES-2133 / IAM M-273 / BP-1).